The sequence spans 155 residues: MTVNPDAPALPTLPLAVETIQGLLPHRYPFALVDRIIDYVPGERAVGIKNVTFNEPQFQGHFPGRPLMPGVLIVEAMAQVGGVIVTLMPDMPQGLFVFAGIDQVRFRRPVVPGDQLVLSAQLLSVKRRRFCKIQGEAMVDGQLAASGELLFSLVE.

Histidine 61 is a catalytic residue.

The protein belongs to the thioester dehydratase family. FabZ subfamily.

The protein resides in the cytoplasm. It catalyses the reaction a (3R)-hydroxyacyl-[ACP] = a (2E)-enoyl-[ACP] + H2O. Functionally, involved in unsaturated fatty acids biosynthesis. Catalyzes the dehydration of short chain beta-hydroxyacyl-ACPs and long chain saturated and unsaturated beta-hydroxyacyl-ACPs. This chain is 3-hydroxyacyl-[acyl-carrier-protein] dehydratase FabZ, found in Synechococcus elongatus (strain ATCC 33912 / PCC 7942 / FACHB-805) (Anacystis nidulans R2).